The primary structure comprises 674 residues: Methionine--tRNA ligase (674 aa).

The 'HIGH' region motif lies at 11–21 (PYANGDLHLGH). Residues Cys142, Cys145, Cys155, and Cys158 each contribute to the Zn(2+) site. A 'KMSKS' region motif is present at residues 330 to 334 (KMSKS). Residue Lys333 coordinates ATP. The tRNA-binding domain occupies 574 to 674 (DFMKVDLRIA…EGAQPGMRVK (101 aa)).

This sequence belongs to the class-I aminoacyl-tRNA synthetase family. MetG type 1 subfamily. In terms of assembly, homodimer. The cofactor is Zn(2+).

The protein resides in the cytoplasm. It carries out the reaction tRNA(Met) + L-methionine + ATP = L-methionyl-tRNA(Met) + AMP + diphosphate. Functionally, is required not only for elongation of protein synthesis but also for the initiation of all mRNA translation through initiator tRNA(fMet) aminoacylation. The sequence is that of Methionine--tRNA ligase from Francisella tularensis subsp. tularensis (strain FSC 198).